Reading from the N-terminus, the 151-residue chain is Globin-2 B chain (151 aa).

S1 bears the N-acetylserine mark. The Globin domain occupies 11–151 (VSNADQKDLL…SLVAVVQASL (141 aa)). H103 provides a ligand contact to heme b.

Belongs to the globin family. Heterotetramer of two alpha chains and two beta chains.

In Anadara inaequivalvis (Inequivalve ark), this protein is Globin-2 B chain.